The following is a 293-amino-acid chain: 4-hydroxy-tetrahydrodipicolinate synthase (293 aa).

Position 45 (Thr45) interacts with pyruvate. The Proton donor/acceptor role is filled by Tyr133. Lys161 functions as the Schiff-base intermediate with substrate in the catalytic mechanism. Ile204 lines the pyruvate pocket.

It belongs to the DapA family. As to quaternary structure, homotetramer; dimer of dimers.

The protein localises to the cytoplasm. It carries out the reaction L-aspartate 4-semialdehyde + pyruvate = (2S,4S)-4-hydroxy-2,3,4,5-tetrahydrodipicolinate + H2O + H(+). It participates in amino-acid biosynthesis; L-lysine biosynthesis via DAP pathway; (S)-tetrahydrodipicolinate from L-aspartate: step 3/4. Catalyzes the condensation of (S)-aspartate-beta-semialdehyde [(S)-ASA] and pyruvate to 4-hydroxy-tetrahydrodipicolinate (HTPA). The chain is 4-hydroxy-tetrahydrodipicolinate synthase from Edwardsiella ictaluri (strain 93-146).